A 191-amino-acid chain; its full sequence is Cytochrome c oxidase subunit 6b-1 (191 aa).

A compositionally biased stretch (polar residues) spans 1–14 (MADAVNAQTPSLSE). The tract at residues 1–126 (MADAVNAQTP…IKLETAPADF (126 aa)) is disordered. Residue Ala2 is modified to N-acetylalanine. Composition is skewed to basic and acidic residues over residues 16–37 (YHLE…KEVA) and 45–56 (EEVKTEQAKEES). Low complexity predominate over residues 72–98 (APESTEVASEAPAAAEDNAEETPAAAE). The segment covering 99–114 (ENNDENASEEVAEETP) has biased composition (acidic residues). Positions 134–177 (TRHCFTRYVEYHRCVAAKGDDAPECDKFAKFYRSLCPSEWVDRW) constitute a CHCH domain. Residues 137–147 (CFTRYVEYHRC) carry the Cx9C motif motif. 2 disulfide bridges follow: Cys137–Cys169 and Cys147–Cys158. The Cx10C motif motif lies at 158-169 (CDKFAKFYRSLC).

The protein belongs to the cytochrome c oxidase subunit 6B (TC 3.D.4.8) family. In terms of tissue distribution, expressed in the whole plant.

The protein resides in the mitochondrion. Its function is as follows. This protein is one of the nuclear-coded polypeptide chains of cytochrome c oxidase, the terminal oxidase in mitochondrial electron transport. This protein may be one of the heme-binding subunits of the oxidase. The protein is Cytochrome c oxidase subunit 6b-1 (COX6B-1) of Arabidopsis thaliana (Mouse-ear cress).